We begin with the raw amino-acid sequence, 591 residues long: Pyruvate kinase 2 (591 aa).

R38 contacts substrate. 3 residues coordinate K(+): N40, S42, and D72. 40–43 (NFSH) lines the ATP pocket. Residues R79 and K164 each contribute to the ATP site. Residue E229 participates in Mg(2+) binding. The substrate site is built by G252, D253, and T285. D253 serves as a coordination point for Mg(2+).

The protein belongs to the pyruvate kinase family. It in the C-terminal section; belongs to the PEP-utilizing enzyme family. In terms of assembly, homotetramer. It depends on Mg(2+) as a cofactor. Requires K(+) as cofactor.

It carries out the reaction pyruvate + ATP = phosphoenolpyruvate + ADP + H(+). It participates in carbohydrate degradation; glycolysis; pyruvate from D-glyceraldehyde 3-phosphate: step 5/5. In Synechocystis sp. (strain ATCC 27184 / PCC 6803 / Kazusa), this protein is Pyruvate kinase 2 (pyk2).